Consider the following 201-residue polypeptide: Glycerol-3-phosphate acyltransferase (201 aa).

Helical transmembrane passes span 5–25, 55–75, 87–107, 118–138, and 164–184; these read LLGA…FGVV, KMGV…ILVA, FWVT…VWLG, LGIF…GYAV, and TYGP…LIFV.

It belongs to the PlsY family. Probably interacts with PlsX.

It is found in the cell inner membrane. The enzyme catalyses an acyl phosphate + sn-glycerol 3-phosphate = a 1-acyl-sn-glycero-3-phosphate + phosphate. The protein operates within lipid metabolism; phospholipid metabolism. Functionally, catalyzes the transfer of an acyl group from acyl-phosphate (acyl-PO(4)) to glycerol-3-phosphate (G3P) to form lysophosphatidic acid (LPA). This enzyme utilizes acyl-phosphate as fatty acyl donor, but not acyl-CoA or acyl-ACP. This is Glycerol-3-phosphate acyltransferase from Anaeromyxobacter dehalogenans (strain 2CP-1 / ATCC BAA-258).